The following is a 514-amino-acid chain: Bifunctional NAD(P)H-hydrate repair enzyme Nnr (514 aa).

Residues 1–218 (MKLVTSEEIK…IPIEIVNDIV (218 aa)) are NAD(P)H-hydrate epimerase. Residues 9–215 (IKRLEERLER…RLGIPIEIVN (207 aa)) form the YjeF N-terminal domain. The NADPHX 1; for epimerase activity stretch occupies residues 59–63 (NNGGD). Asparagine 60 and aspartate 125 together coordinate K(+). Residues 129 to 135 (GIGLKRE) form an NADPHX 1; for epimerase activity region. Aspartate 158 is a binding site for (6S)-NADPHX. Serine 161 contacts K(+). The region spanning 226–508 (DWELLKDIVR…KILPLAIDEV (283 aa)) is the YjeF C-terminal domain. The interval 226–514 (DWELLKDIVR…IDEVIRRRNV (289 aa)) is ADP-dependent (S)-NAD(P)H-hydrate dehydratase. Glycine 333 serves as a coordination point for (6S)-NADPHX. An NADPHX 2; for dehydratase activity region spans residues 382-388 (HYGEMSR). Residues 419-423 (KGPNS) and 439-448 (DFLLATAGSG) each bind ADP. Aspartate 449 is a binding site for (6S)-NADPHX.

In the N-terminal section; belongs to the NnrE/AIBP family. It in the C-terminal section; belongs to the NnrD/CARKD family. The cofactor is K(+).

It carries out the reaction (6S)-NADHX + ADP = AMP + phosphate + NADH + H(+). The enzyme catalyses (6S)-NADPHX + ADP = AMP + phosphate + NADPH + H(+). The catalysed reaction is (6R)-NADHX = (6S)-NADHX. It catalyses the reaction (6R)-NADPHX = (6S)-NADPHX. Functionally, bifunctional enzyme that catalyzes the epimerization of the S- and R-forms of NAD(P)HX and the dehydration of the S-form of NAD(P)HX at the expense of ADP, which is converted to AMP. This allows the repair of both epimers of NAD(P)HX, a damaged form of NAD(P)H that is a result of enzymatic or heat-dependent hydration. In Dictyoglomus turgidum (strain DSM 6724 / Z-1310), this protein is Bifunctional NAD(P)H-hydrate repair enzyme Nnr (nnr).